The primary structure comprises 140 residues: 6,7-dimethyl-8-ribityllumazine synthase (140 aa).

Residues phenylalanine 11, 42 to 44 (ALE), and 66 to 68 (VVI) each bind 5-amino-6-(D-ribitylamino)uracil. Residue 71-72 (ET) coordinates (2S)-2-hydroxy-3-oxobutyl phosphate. Catalysis depends on histidine 74, which acts as the Proton donor. Asparagine 98 contributes to the 5-amino-6-(D-ribitylamino)uracil binding site. Arginine 112 serves as a coordination point for (2S)-2-hydroxy-3-oxobutyl phosphate.

Belongs to the DMRL synthase family.

The enzyme catalyses (2S)-2-hydroxy-3-oxobutyl phosphate + 5-amino-6-(D-ribitylamino)uracil = 6,7-dimethyl-8-(1-D-ribityl)lumazine + phosphate + 2 H2O + H(+). It participates in cofactor biosynthesis; riboflavin biosynthesis; riboflavin from 2-hydroxy-3-oxobutyl phosphate and 5-amino-6-(D-ribitylamino)uracil: step 1/2. Functionally, catalyzes the formation of 6,7-dimethyl-8-ribityllumazine by condensation of 5-amino-6-(D-ribitylamino)uracil with 3,4-dihydroxy-2-butanone 4-phosphate. This is the penultimate step in the biosynthesis of riboflavin. In Erythrobacter litoralis (strain HTCC2594), this protein is 6,7-dimethyl-8-ribityllumazine synthase.